Here is a 393-residue protein sequence, read N- to C-terminus: Heparan sulfate glucosamine 3-O-sulfotransferase 3A1 (393 aa).

The Cytoplasmic portion of the chain corresponds to 1 to 24; sequence MAPSGPTGAQPSPAEPLSRSIFRK. Residues 25-43 traverse the membrane as a helical; Signal-anchor for type II membrane protein segment; the sequence is FLLMLCSLLTSLYVFYCLA. Residues 44-393 lie on the Lumenal side of the membrane; sequence ERCPPGSGPV…MTGRDFGWDG (350 aa). The disordered stretch occupies residues 85 to 121; the sequence is QRRRRGRSGPGDSSDQEEQSPGLAAAPGGSGAGSSVA. Residue 149–153 coordinates 3'-phosphoadenylyl sulfate; that stretch reads KGGTR. Residues 171–177 and 202–205 contribute to the substrate site; these read EPHFFDR and KTPS. 3'-phosphoadenylyl sulfate-binding residues include Arg-230 and Ser-238. N-linked (GlcNAc...) asparagine glycosylation is present at Asn-260. 270–271 is a substrate binding site; the sequence is WS. Asn-331 carries an N-linked (GlcNAc...) asparagine glycan. The cysteines at positions 338 and 350 are disulfide-linked. 355 to 359 contributes to the 3'-phosphoadenylyl sulfate binding site; that stretch reads KGRAH.

The protein belongs to the sulfotransferase 1 family.

The protein localises to the golgi apparatus membrane. It catalyses the reaction alpha-D-glucosaminyl-[heparan sulfate](n) + 3'-phosphoadenylyl sulfate = 3-sulfo-alpha-D-glucosaminyl-[heparan sulfate](n) + adenosine 3',5'-bisphosphate + H(+). In terms of biological role, sulfotransferase that utilizes 3'-phospho-5'-adenylyl sulfate (PAPS) to catalyze the transfer of a sulfo group to an N-unsubstituted glucosamine linked to a 2-O-sulfo iduronic acid unit on heparan sulfate. Catalyzes the O-sulfation of glucosamine in IdoUA2S-GlcNS and also in IdoUA2S-GlcNH2. Unlike HS3ST1/3-OST-1, does not convert non-anticoagulant heparan sulfate to anticoagulant heparan sulfate. In Mus musculus (Mouse), this protein is Heparan sulfate glucosamine 3-O-sulfotransferase 3A1 (Hs3st3a1).